A 333-amino-acid chain; its full sequence is MSNLITIERHILEQQKFFPDAQGELTDLLNDVAFAAKLVRREVVRAGLVDILGFTGSTNVQGEEVKKLDLFANEKIISAIGQHGRFAIMGSEENEGVIIPPKNESGNYALLFDPLDGSSNIDVNVSVGTIFSIYKLKGDDPGKASLSDCLQHGYEQVAAGYVIYGSSVVMVYTTGHGVHGFTYDPTIGEFLLSHENIITPKSGKYYSINEGSYAQFNEGTKRYLDYIKEEDPATNRPYSTRYIGSLVADFHRNLLTGGVFVYPPTTKHLKGKLRLMYEANPLAFICEQAGGRATNGRDRILDIQPLELHQRTPLYIGSVDDVILAEEFEQGIR.

The Mg(2+) site is built by E92, D113, L115, and D116. Substrate-binding positions include 116–119 (DGSS), N209, Y242, and K272. E278 contacts Mg(2+).

It belongs to the FBPase class 1 family. Homotetramer. It depends on Mg(2+) as a cofactor.

The protein resides in the cytoplasm. The catalysed reaction is beta-D-fructose 1,6-bisphosphate + H2O = beta-D-fructose 6-phosphate + phosphate. It functions in the pathway carbohydrate biosynthesis; Calvin cycle. This chain is Fructose-1,6-bisphosphatase class 1, found in Pelodictyon phaeoclathratiforme (strain DSM 5477 / BU-1).